The primary structure comprises 881 residues: Putative cation exchanger C521.04c (881 aa).

The span at 1-19 shows a compositional bias: polar residues; it reads MSQPADINQSESSAETITQ. Disordered stretches follow at residues 1-39 and 52-142; these read MSQP…EQNL and ADAT…LRSE. Over residues 63-77 the composition is skewed to basic and acidic residues; that stretch reads NDRDIYSPREIDQYT. The span at 83–95 shows a compositional bias: polar residues; the sequence is RTDPSTSTISNAR. A compositionally biased stretch (low complexity) spans 99-113; that stretch reads RNSVSRLSRSSSNVR. S129 is subject to Phosphoserine. 8 consecutive transmembrane segments (helical) span residues 200–220, 329–349, 407–427, 438–458, 471–491, 504–524, 537–557, and 594–614; these read IWLI…YIFF, LIIA…IFFV, IYII…FGFF, VFLF…IGMA, GAFI…SVAL, IGSI…AGAI, GATS…TMLF, and LPFT…GLWF. The interval 641–717 is disordered; that stretch reads VGEPVNQDTA…SQNSHGDDAP (77 aa). Residues 646–657 are compositionally biased toward polar residues; sequence NQDTAGNMSDSS. Positions 678-688 are enriched in low complexity; it reads SSGLSSNGSEN. 5 helical membrane passes run 726–746, 762–782, 794–814, 828–848, and 859–879; these read IILL…VEHV, LTLF…SFAL, SAYA…YSLF, LFTM…VFLL, and YFKG…FTFF.

The protein belongs to the Ca(2+):cation antiporter (CaCA) (TC 2.A.19) family.

Its subcellular location is the endoplasmic reticulum membrane. In terms of biological role, putative cation exchanger. The sequence is that of Putative cation exchanger C521.04c from Schizosaccharomyces pombe (strain 972 / ATCC 24843) (Fission yeast).